We begin with the raw amino-acid sequence, 405 residues long: Putative colanic acid biosynthesis glycosyl transferase WcaC (405 aa).

Its pathway is slime biogenesis; slime polysaccharide biosynthesis. The chain is Putative colanic acid biosynthesis glycosyl transferase WcaC (wcaC) from Escherichia coli (strain K12).